The chain runs to 265 residues: Tryptophan synthase alpha chain (265 aa).

Residues Glu-49 and Asp-60 each act as proton acceptor in the active site.

This sequence belongs to the TrpA family. In terms of assembly, tetramer of two alpha and two beta chains.

It catalyses the reaction (1S,2R)-1-C-(indol-3-yl)glycerol 3-phosphate + L-serine = D-glyceraldehyde 3-phosphate + L-tryptophan + H2O. It participates in amino-acid biosynthesis; L-tryptophan biosynthesis; L-tryptophan from chorismate: step 5/5. Its function is as follows. The alpha subunit is responsible for the aldol cleavage of indoleglycerol phosphate to indole and glyceraldehyde 3-phosphate. The chain is Tryptophan synthase alpha chain from Cupriavidus metallidurans (strain ATCC 43123 / DSM 2839 / NBRC 102507 / CH34) (Ralstonia metallidurans).